The primary structure comprises 264 residues: Apolipoprotein A-I (264 aa).

An N-terminal signal peptide occupies residues 1–18 (MKAVVLAVAVLFLTGSQA). Repeat copies occupy residues 67-88 (LNLLANWNTLTSTFNNLREQLG) and 89-110 (SVTKEFWDNLGEDTVWLRQQMN). The interval 67–264 (LNLLANWNTL…DQASKQLSAQ (198 aa)) is 10 X approximate tandem repeats. A Methionine sulfoxide modification is found at M109. The stretch at 111 to 121 (KDLEEVKQKVQ) is one 3; half-length repeat. Repeat copies occupy residues 122 to 142 (SYLDNFQKKVNEEVERYRDKV), 144 to 165 (PLGKELHKDAQQKLKELQEKLA), 166 to 187 (PLGQDIRQRAREYVDALRTHLG), 188 to 208 (SYTQGMRQGLAKRLEALKESA), and 209 to 229 (PVSEYQVKASKHLKTFSEKAK). M193 is modified (methionine sulfoxide). Residues 230–240 (PALEDLRQGLM) form a 9; half-length repeat. M240 is subject to Methionine sulfoxide. Repeat 10 spans residues 241–264 (PVMESLKASFLSSIDQASKQLSAQ).

This sequence belongs to the apolipoprotein A1/A4/E family. As to quaternary structure, homodimer. Interacts with APOA1BP and CLU. Component of a sperm activating protein complex (SPAP), consisting of APOA1, an immunoglobulin heavy chain, an immunoglobulin light chain and albumin. Interacts with NDRG1. Interacts with SCGB3A2. Interacts with NAXE and YJEFN3. Glycosylated. In terms of processing, palmitoylated. Post-translationally, phosphorylation sites are present in the extracellular medium. In terms of tissue distribution, major protein of plasma HDL, also found in chylomicrons.

The protein localises to the secreted. In terms of biological role, participates in the reverse transport of cholesterol from tissues to the liver for excretion by promoting cholesterol efflux from tissues and by acting as a cofactor for the lecithin cholesterol acyltransferase (LCAT). As part of the SPAP complex, activates spermatozoa motility. This is Apolipoprotein A-I (Apoa1) from Heterocephalus glaber (Naked mole rat).